The chain runs to 37 residues: Photosystem II reaction center protein M (37 aa).

A helical transmembrane segment spans residues 7 to 27; the sequence is GFIAVLMFLAIPTAFLLIPYV.

It belongs to the PsbM family. As to quaternary structure, PSII is composed of 1 copy each of membrane proteins PsbA, PsbB, PsbC, PsbD, PsbE, PsbF, PsbH, PsbI, PsbJ, PsbK, PsbL, PsbM, PsbT, PsbX, PsbY, PsbZ, Psb30/Ycf12, at least 3 peripheral proteins of the oxygen-evolving complex and a large number of cofactors. It forms dimeric complexes.

It localises to the plastid. It is found in the chloroplast thylakoid membrane. One of the components of the core complex of photosystem II (PSII). PSII is a light-driven water:plastoquinone oxidoreductase that uses light energy to abstract electrons from H(2)O, generating O(2) and a proton gradient subsequently used for ATP formation. It consists of a core antenna complex that captures photons, and an electron transfer chain that converts photonic excitation into a charge separation. This subunit is found at the monomer-monomer interface. This Pinus koraiensis (Korean pine) protein is Photosystem II reaction center protein M.